A 126-amino-acid polypeptide reads, in one-letter code: MTFLRPILALLAATALVTTSAQVDGGYSKKEVTPEDMELLQKAQSNVSAYNSDVTSRICYLKVDSLETQVVSGENYKFHVSGCSVNSDNELGGCANQNCESSKYDIVIYSQSWTNTLEVTSITPVK.

Positions 1–21 (MTFLRPILALLAATALVTTSA) are cleaved as a signal peptide. A glycan (N-linked (GlcNAc...) asparagine) is linked at asparagine 46. The Secondary area of contact motif lies at 69 to 73 (QVVSG).

The protein belongs to the cystatin family. As to quaternary structure, interacts with the host papain-like cysteine protease RCR3. Interacts with the host papain-like cysteine protease C14.

Its subcellular location is the secreted. Secreted effector that interacts with and inhibits the pathogenesis-related papain-like cysteine proteases C14 and RCR3 of host plants. Inhibition of host proteases by a pathogen extracellular protease inhibitor forms a specific type of defense-counterdefense mechanism between plants and microbial pathogens. The chain is Cystatin-like cysteine protease inhibitor EPIC1 from Phytophthora infestans (Potato late blight agent).